We begin with the raw amino-acid sequence, 98 residues long: Cell cycle protein GpsB (98 aa).

Residues 34–71 (LDLIIKDYEAFQQEIDELRQENARLKRQVEELQKRPAM) are a coiled coil.

This sequence belongs to the GpsB family. Forms polymers through the coiled coil domains. Interacts with PBP1, MreC and EzrA.

The protein localises to the cytoplasm. Functionally, divisome component that associates with the complex late in its assembly, after the Z-ring is formed, and is dependent on DivIC and PBP2B for its recruitment to the divisome. Together with EzrA, is a key component of the system that regulates PBP1 localization during cell cycle progression. Its main role could be the removal of PBP1 from the cell pole after pole maturation is completed. Also contributes to the recruitment of PBP1 to the division complex. Not essential for septum formation. The protein is Cell cycle protein GpsB of Geobacillus kaustophilus (strain HTA426).